Consider the following 338-residue polypeptide: MSITVNQIVLHQLVKNVDGDSIKMESVLRDELLSITPEVEQMMLQLHQGYQNKAKAFGVFQEKSIFAQHLNRLLEQEIEFLGFSQYSTKLLADELGKYNFVESGTLILCQYNFLATDYLFIALLDSRHSMLVDEHLDIRRTEYLDITQFDIAARINLTDLQVNANSNRYLTFIKGRVGRKISDFFMDFLGAEEGLNPQVQNQCLLQAVSDYCDQGELNKEQTQAVKKQVFEYCKGQLSNGNNIKLRELSDSLPTLNEQPFVVFTEEQNYGLEESIPPIRSTLKSLTKFSGSGKGVTLSFDAELLNTRIQWDPMTDTLTIKGLPPNLKDQLQKALKSEN.

Belongs to the YejK family.

The protein resides in the cytoplasm. The protein localises to the nucleoid. The chain is Nucleoid-associated protein CGSHiGG_07705 from Haemophilus influenzae (strain PittGG).